Here is a 42-residue protein sequence, read N- to C-terminus: MRDFKTYLSAAPVLSTLWLGALAGLLIEINRFFPDALTFPFF.

Residues 7 to 27 (YLSAAPVLSTLWLGALAGLLI) form a helical membrane-spanning segment.

The protein belongs to the PsaJ family.

It is found in the plastid membrane. May help in the organization of the PsaE and PsaF subunits. The chain is Photosystem I reaction center subunit IX from Cuscuta exaltata (Tall dodder).